The following is a 223-amino-acid chain: N-(5'-phosphoribosyl)anthranilate isomerase (223 aa).

The protein belongs to the TrpF family.

It carries out the reaction N-(5-phospho-beta-D-ribosyl)anthranilate = 1-(2-carboxyphenylamino)-1-deoxy-D-ribulose 5-phosphate. It functions in the pathway amino-acid biosynthesis; L-tryptophan biosynthesis; L-tryptophan from chorismate: step 3/5. This is N-(5'-phosphoribosyl)anthranilate isomerase from Moorella thermoacetica (strain ATCC 39073 / JCM 9320).